A 69-amino-acid polypeptide reads, in one-letter code: Cold shock-like protein CspC (69 aa).

Positions 6–66 constitute a CSD domain; sequence GQVKWFNESK…GQKGPAAVNV (61 aa).

It localises to the cytoplasm. The protein is Cold shock-like protein CspC (cspC) of Escherichia coli O157:H7.